The chain runs to 539 residues: Membrane protein insertase YidC (539 aa).

A helical membrane pass occupies residues 6–26 (VILAVALSFAVLLGWQFLFPP). The tract at residues 28 to 63 (PQQPAPAQQEQTAQPNQAVDSSVAGPVSNQLPDPAS) is disordered. Positions 32–45 (APAQQEQTAQPNQA) are enriched in low complexity. The segment covering 54–63 (VSNQLPDPAS) has biased composition (polar residues). The next 3 membrane-spanning stretches (helical) occupy residues 349–369 (YGIAIILLTIVIKILFWPLSH), 421–441 (MLLQIPVFFGLYKALMGTVAL), and 496–516 (IMMFLPLVFTFMFLNFPSGLV).

It belongs to the OXA1/ALB3/YidC family. Type 1 subfamily. As to quaternary structure, interacts with the Sec translocase complex via SecD. Specifically interacts with transmembrane segments of nascent integral membrane proteins during membrane integration.

It is found in the cell inner membrane. Functionally, required for the insertion and/or proper folding and/or complex formation of integral membrane proteins into the membrane. Involved in integration of membrane proteins that insert both dependently and independently of the Sec translocase complex, as well as at least some lipoproteins. Aids folding of multispanning membrane proteins. This is Membrane protein insertase YidC from Maridesulfovibrio salexigens (strain ATCC 14822 / DSM 2638 / NCIMB 8403 / VKM B-1763) (Desulfovibrio salexigens).